A 180-amino-acid polypeptide reads, in one-letter code: Large ribosomal subunit protein uL6 (180 aa).

Belongs to the universal ribosomal protein uL6 family. As to quaternary structure, part of the 50S ribosomal subunit.

Functionally, this protein binds to the 23S rRNA, and is important in its secondary structure. It is located near the subunit interface in the base of the L7/L12 stalk, and near the tRNA binding site of the peptidyltransferase center. This chain is Large ribosomal subunit protein uL6, found in Lachnoclostridium phytofermentans (strain ATCC 700394 / DSM 18823 / ISDg) (Clostridium phytofermentans).